Consider the following 566-residue polypeptide: Ubiquitin carboxyl-terminal hydrolase 21 (566 aa).

2 stretches are compositionally biased toward basic and acidic residues: residues Met-1–Glu-14 and Pro-58–Arg-70. Disordered regions lie at residues Met-1 to Pro-103 and Pro-146 to Leu-169. 2 stretches are compositionally biased toward low complexity: residues Gly-71–Pro-81 and Leu-151–Leu-160. A Nuclear export signal motif is present at residues Glu-134 to Arg-152. The 348-residue stretch at Val-212–Met-559 folds into the USP domain. The active-site Nucleophile is Cys-221. The segment at Ala-324–Glu-349 is disordered. Zn(2+) contacts are provided by Cys-385, Cys-388, Cys-438, and Cys-441. The Proton acceptor role is filled by His-519.

This sequence belongs to the peptidase C19 family. USP21 subfamily. As to quaternary structure, interacts with BEND3.

Its subcellular location is the cytoplasm. It is found in the nucleus. The catalysed reaction is Thiol-dependent hydrolysis of ester, thioester, amide, peptide and isopeptide bonds formed by the C-terminal Gly of ubiquitin (a 76-residue protein attached to proteins as an intracellular targeting signal).. In terms of biological role, deubiquitinates histone H2A, a specific tag for epigenetic transcriptional repression, thereby acting as a coactivator. Deubiquitination of histone H2A releaves the repression of di- and trimethylation of histone H3 at 'Lys-4', resulting in regulation of transcriptional initiation. Regulates gene expression via histone H2A deubiquitination. Deubiquitinates BAZ2A/TIP5 leading to its stabilization. Also capable of removing NEDD8 from NEDD8 conjugates but has no effect on Sentrin-1 conjugates. Also acts as a negative regulator of the ribosome quality control (RQC) by mediating deubiquitination of 40S ribosomal proteins RPS10/eS10 and RPS20/uS10, thereby antagonizing ZNF598-mediated 40S ubiquitination. The sequence is that of Ubiquitin carboxyl-terminal hydrolase 21 from Mus musculus (Mouse).